A 638-amino-acid chain; its full sequence is Chaperone protein DnaK (638 aa).

A Phosphothreonine; by autocatalysis modification is found at T198. A disordered region spans residues 598 to 638 (YEASQKEAAEADAKADAAKDSDVVDADFEEIDEDDDKKKSA). The span at 601–619 (SQKEAAEADAKADAAKDSD) shows a compositional bias: basic and acidic residues. Positions 620–632 (VVDADFEEIDEDD) are enriched in acidic residues.

Belongs to the heat shock protein 70 family.

Functionally, acts as a chaperone. The polypeptide is Chaperone protein DnaK (Mesorhizobium japonicum (strain LMG 29417 / CECT 9101 / MAFF 303099) (Mesorhizobium loti (strain MAFF 303099))).